The chain runs to 56 residues: Ribosome biogenesis protein Nop10 (56 aa).

The protein belongs to the NOP10 family.

Functionally, involved in ribosome biogenesis; more specifically in 18S rRNA pseudouridylation and in cleavage of pre-rRNA. In Saccharolobus islandicus (strain Y.N.15.51 / Yellowstone #2) (Sulfolobus islandicus), this protein is Ribosome biogenesis protein Nop10.